Reading from the N-terminus, the 465-residue chain is Mothers against decapentaplegic homolog 5 (465 aa).

Threonine 2 is modified (N-acetylthreonine). Residues 13 to 137 (PAVKRLLGWK…YKRVESPVLP (125 aa)) enclose the MH1 domain. Residues cysteine 65, cysteine 110, cysteine 122, and histidine 127 each contribute to the Zn(2+) site. Positions 163 to 243 (NEPHMPQNAT…GQDNSQPMDT (81 aa)) are disordered. The span at 169–182 (QNATFPDSFHQPNS) shows a compositional bias: polar residues. Residues 186 to 197 (PLSPNSPYPPSP) show a composition bias toward pro residues. Low complexity predominate over residues 198 to 214 (ASSTYPNSPASSGPGSP). Polar residues predominate over residues 234 to 243 (GQDNSQPMDT). An MH2 domain is found at 271–465 (WCSIVYYELN…SPLNPISSVS (195 aa)). 2 positions are modified to phosphoserine: serine 463 and serine 465.

It belongs to the dwarfin/SMAD family. Homodimer. Forms trimers with the co-SMAD SMAD4. Interacts with PEBP2-alpha subunit and SMURF1. Interacts with SUV39H1 and SUV39H2. Interacts (via MH2 domain) with LEMD3. Interacts with WWP1. Interacts with TMEM119. Interacts with ZNF8. Interacts with RANBP3L. Interacts with HK1. Interacts with HGS; this interaction attenuates BMP signaling. Phosphorylated on serine by BMP (bone morphogenetic proteins) type 1 receptor kinase. In terms of processing, ubiquitin-mediated proteolysis by SMAD-specific E3 ubiquitin ligase SMURF1.

The protein resides in the cytoplasm. It localises to the nucleus. It is found in the mitochondrion. Functionally, transcriptional regulator that plays a role in various cellular processes including embryonic development, cell differentiation, angiogenesis and tissue homeostasis. Upon BMP ligand binding to their receptors at the cell surface, is phosphorylated by activated type I BMP receptors (BMPRIs) and associates with SMAD4 to form a heteromeric complex which translocates into the nucleus acting as transcription factor. In turn, the hetero-trimeric complex recognizes cis-regulatory elements containing Smad Binding Elements (SBEs) to modulate the outcome of the signaling network. Non-phosphorylated SMAD5 has a cytoplasmic role in energy metabolism regulation by promoting mitochondrial respiration and glycolysis in response to cytoplasmic pH changes. Mechanistically, interacts with hexokinase 1/HK1 and thereby accelerates glycolysis. The polypeptide is Mothers against decapentaplegic homolog 5 (Smad5) (Rattus norvegicus (Rat)).